A 562-amino-acid polypeptide reads, in one-letter code: Protein wntless (562 aa).

Over 1–15 (MSGTILENLSGRKLS) the chain is Cytoplasmic. A helical transmembrane segment spans residues 16–36 (ILVSSLMLCQVVCFLMGGLFA). The Lumenal portion of the chain corresponds to 37 to 239 (PVPAGHQTVL…AIHQNGGFTQ (203 aa)). 2 N-linked (GlcNAc...) asparagine glycosylation sites follow: asparagine 58 and asparagine 103. The helical transmembrane segment at 240–260 (VWLVLKTLLFPFVIGIMMWFW) threads the bilayer. Topologically, residues 261-275 (RRVHILQRSPALLEY) are cytoplasmic. A helical membrane pass occupies residues 276 to 296 (MLFYLGGALSFLNLPLELLTL). Topologically, residues 297–311 (GVEMPYMLLLSDVRQ) are lumenal. A helical membrane pass occupies residues 312–332 (GIFYAMLLSFWLVFAGEHMLI). Over 333-344 (QDSPSKSTIRSR) the chain is Cytoplasmic. Residues 345 to 365 (YWKHLSAVVVGCISLFVFDIC) traverse the membrane as a helical segment. The Lumenal portion of the chain corresponds to 366–390 (ERGVQMRNPFYSIWTTPLGAKVAMS). A helical transmembrane segment spans residues 391–411 (FIVLAGVSAAIYFLFLCFMVW). Residues 412-441 (KVFKDIGDKRTSLPSMSQARRLHYEGLIYR) are Cytoplasmic-facing. A helical transmembrane segment spans residues 442–462 (FKFLMLATLLCAGLTVAGFIM). Residues 463–482 (GQMAEGHWKWNENIEIQLTS) lie on the Lumenal side of the membrane. The helical transmembrane segment at 483 to 503 (AFLTGVYGMWNIYIFALIILY) threads the bilayer. Topologically, residues 504–562 (APSHKQWPTMRHSDETTQSNENIVASAASEEIEFSNLPSDSNPSEISSLTSFTRKVAFD) are cytoplasmic.

The protein belongs to the wntless family. Interacts with wg; in the Golgi. Interacts with Vps35, a component of the retromer complex; wls stability is regulated by Vps35.

The protein localises to the presynaptic cell membrane. It is found in the postsynaptic cell membrane. Its subcellular location is the cell membrane. The protein resides in the endoplasmic reticulum membrane. It localises to the endosome membrane. The protein localises to the golgi apparatus membrane. Functionally, a segment polarity gene required for wingless (wg)-dependent patterning processes, acting in both wg-sending cells and wg-target cells. In non-neuronal cells wls directs wg secretion. The wls traffic loop encompasses the Golgi, the cell surface, an endocytic compartment and a retrograde route leading back to the Golgi, and involves clathrin-mediated endocytosis and the retromer complex (a conserved protein complex consisting of Vps35 and Vps26). In neuronal cells (the larval motorneuron NMJ), the wg signal moves across the synapse via the release of wls-containing exosome-like vesicles. Postsynaptic wls is required for the trafficking of fz2 through the fz2-interacting protein Grip. This chain is Protein wntless, found in Drosophila grimshawi (Hawaiian fruit fly).